A 580-amino-acid chain; its full sequence is Ran GTPase-activating protein 1 (580 aa).

LRR repeat units follow at residues 48–71 (YEGLQALRLEGNTVGVEAAKAIAE), 111–134 (GAQLTELDLSDNAFGPDGVRGFEA), 141–168 (CFTLQELKLNNCGMGIGGGKILAAALTE), 207–230 (IGTLEEVHMPQNGINHAGITALAE), 235–258 (NSLLKVINLNDNTFTEKGGVAMAE), 292–315 (LHKLKDLNLSYCEIKADAAVSLAE), and 320–343 (KSDLEKLDLNGNCLGEEGCEQVQE). The disordered stretch occupies residues 356–429 (SLSDDEDEDD…PPKLPVDAST (74 aa)). A compositionally biased stretch (acidic residues) spans 358-399 (SDDEDEDDDDDDEDDDDDEDDENDDEEVEEEEEEVEEEEGGD).

It belongs to the RNA1 family. As to quaternary structure, homodimer. Identified in a complex with RANBP2 and the ubiquitin-conjugating enzyme E2 (UBE2I). Post-translationally, may be sumoylated.

The protein localises to the cytoplasm. It is found in the nucleus. The protein resides in the nucleoplasm. Its subcellular location is the nucleus envelope. It localises to the chromosome. The protein localises to the centromere. It is found in the kinetochore. The protein resides in the cytoskeleton. Its subcellular location is the spindle. Its function is as follows. GTPase activator for RAN, converting it to the GDP-bound state. Converts cytoplasmic GTP-bound RAN to GDP-bound RAN, which is required for RAN-mediated nuclear import and export. The chain is Ran GTPase-activating protein 1 (rangap1) from Xenopus laevis (African clawed frog).